The sequence spans 273 residues: MKKYLLGIGLILALIACKQNVSSLDEKNSVSVDLPGEMKVLVSKEKNKDGKYDLIATVDKLELKGTSDKNNGSGVLEGVKADKSKVKLTISDDLGQTTLEVFKEDGKTLVSKKVTSKDKSSTEEKFNEKGEVSEKIITRADGTRLEYTGIKSDGSGKAKEVLKGYVLEGTLTAEKTTLVVKEGTVTLSKNISKSGEVSVELNDTDSSAATKKTAAWNSGTSTLTITVNSKKTKDLVFTKENTITVQQYDSNGTKLEGSAVEITKLDEIKNALK.

Residues 1-16 (MKKYLLGIGLILALIA) form the signal peptide. The N-palmitoyl cysteine moiety is linked to residue Cys17. A lipid anchor (S-diacylglycerol cysteine) is attached at Cys17.

This sequence belongs to the OspA lipoprotein family.

The protein resides in the cell outer membrane. It localises to the cell surface. Induces host (human and mouse) cytokine release by monocyte cell lines via TLR2 and CD14; nonlipidated protein does not stimulate host cells. The sequence is that of Outer surface protein A from Borreliella burgdorferi (strain ATCC 35210 / DSM 4680 / CIP 102532 / B31) (Borrelia burgdorferi).